Reading from the N-terminus, the 76-residue chain is Dermaseptin-H1 (76 aa).

The first 22 residues, 1-22 (MDILKKSLFIVLFLGLVSLSIC), serve as a signal peptide directing secretion. The propeptide occupies 23 to 45 (EEEKRENEDEEEQEDDEQSEEKR). A disordered region spans residues 25–44 (EKRENEDEEEQEDDEQSEEK). Positions 30 to 41 (EDEEEQEDDEQS) are enriched in acidic residues. Glutamine 73 is subject to Glutamine amide. Positions 75 to 76 (EQ) are excised as a propeptide.

In terms of tissue distribution, expressed by the skin glands.

The protein localises to the secreted. Its function is as follows. Has antimicrobial activity. The polypeptide is Dermaseptin-H1 (Pithecopus hypochondrialis (Orange-legged leaf frog)).